The following is a 257-amino-acid chain: 5-oxoprolinase subunit A (257 aa).

It belongs to the LamB/PxpA family. In terms of assembly, forms a complex composed of PxpA, PxpB and PxpC.

The enzyme catalyses 5-oxo-L-proline + ATP + 2 H2O = L-glutamate + ADP + phosphate + H(+). Functionally, catalyzes the cleavage of 5-oxoproline to form L-glutamate coupled to the hydrolysis of ATP to ADP and inorganic phosphate. This is 5-oxoprolinase subunit A from Natranaerobius thermophilus (strain ATCC BAA-1301 / DSM 18059 / JW/NM-WN-LF).